The primary structure comprises 477 residues: Putative 4-(hydroxymethyl)benzenesulfonate dehydrogenase TsaD2 (477 aa).

NAD(+)-binding positions include 154–155 (WN), 178–181 (KAAE), and 230–231 (GS). The Proton acceptor role is filled by Glu252. Position 253 (Leu253) interacts with NAD(+). Cys286 (nucleophile) is an active-site residue. Position 381 (Glu381) interacts with NAD(+).

The protein belongs to the aldehyde dehydrogenase family. In terms of assembly, homodimer.

It catalyses the reaction 4-(hydroxymethyl)benzenesulfonate + NAD(+) = 4-formylbenzenesulfonate + NADH + H(+). Functionally, involved in the toluene-4-sulfonate degradation pathway. Does not discriminate between the sulfonate and the carboxyl substituents and can also be involved in the p-toluenecarboxylate degradation pathway. The polypeptide is Putative 4-(hydroxymethyl)benzenesulfonate dehydrogenase TsaD2 (tsaD2) (Comamonas testosteroni (Pseudomonas testosteroni)).